The primary structure comprises 303 residues: RELT-like protein 2 (303 aa).

Residues 15–35 (LYMLFLLVLVFFLMGLVGFMI) form a helical membrane-spanning segment. 3 disordered regions span residues 47 to 68 (RTSRGSEPDDAQLQPPEDDDVN), 135 to 214 (CSRS…QPRT), and 249 to 303 (PCTL…AGGM). Residue S52 is modified to Phosphoserine. 2 stretches are compositionally biased toward basic and acidic residues: residues 148 to 158 (RSKEGKSRPRP) and 172 to 188 (THIEKRYGLHEHRDGSP). Residues 194–212 (GSGGGQEPGGSQAAGGGQP) show a composition bias toward gly residues. Positions 274 to 295 (GLSSQEANGQPTKLDTSGQQES) are enriched in polar residues.

This sequence belongs to the RELT family. In terms of assembly, interacts with RELT, RELL1, OXSR1, PLSCR1 and TRAF2.

The protein resides in the cell membrane. In terms of biological role, induces activation of MAPK14/p38 cascade, when overexpressed. Induces apoptosis, when overexpressed. The sequence is that of RELT-like protein 2 (Rell2) from Mus musculus (Mouse).